Here is a 76-residue protein sequence, read N- to C-terminus: MENKLSFEEAISQLEHLVSKLEQGDVPLEEAISYFKEGMELSKLCDEKLKDVQEQMAVILGEDGQLEPFTALGDEA.

Belongs to the XseB family. In terms of assembly, heterooligomer composed of large and small subunits.

It is found in the cytoplasm. The enzyme catalyses Exonucleolytic cleavage in either 5'- to 3'- or 3'- to 5'-direction to yield nucleoside 5'-phosphates.. Functionally, bidirectionally degrades single-stranded DNA into large acid-insoluble oligonucleotides, which are then degraded further into small acid-soluble oligonucleotides. This is Exodeoxyribonuclease 7 small subunit from Bacillus cytotoxicus (strain DSM 22905 / CIP 110041 / 391-98 / NVH 391-98).